The following is a 146-amino-acid chain: Lysozyme C-2 (146 aa).

The first 18 residues, 1-18 (MKTLLVLALLLLSVSVQA), serve as a signal peptide directing secretion. The C-type lysozyme domain occupies 19-146 (KVYDRCEFAR…VSQYIRGCKL (128 aa)). Cystine bridges form between Cys-24–Cys-144, Cys-48–Cys-132, Cys-81–Cys-97, and Cys-93–Cys-111. Active-site residues include Glu-53 and Asp-69.

This sequence belongs to the glycosyl hydrolase 22 family. In terms of assembly, monomer.

The protein localises to the secreted. The enzyme catalyses Hydrolysis of (1-&gt;4)-beta-linkages between N-acetylmuramic acid and N-acetyl-D-glucosamine residues in a peptidoglycan and between N-acetyl-D-glucosamine residues in chitodextrins.. In terms of biological role, lysozymes have primarily a bacteriolytic function; those in tissues and body fluids are associated with the monocyte-macrophage system and enhance the activity of immunoagents. The polypeptide is Lysozyme C-2 (Sus scrofa (Pig)).